Reading from the N-terminus, the 130-residue chain is D-ribose pyranase (130 aa).

The active-site Proton donor is the histidine 20. Substrate contacts are provided by residues aspartate 28, histidine 97, and 119 to 121; that span reads YAN.

Belongs to the RbsD / FucU family. RbsD subfamily. In terms of assembly, homodecamer.

The protein resides in the cytoplasm. It carries out the reaction beta-D-ribopyranose = beta-D-ribofuranose. Its pathway is carbohydrate metabolism; D-ribose degradation; D-ribose 5-phosphate from beta-D-ribopyranose: step 1/2. Catalyzes the interconversion of beta-pyran and beta-furan forms of D-ribose. The protein is D-ribose pyranase of Thermoanaerobacter pseudethanolicus (strain ATCC 33223 / 39E) (Clostridium thermohydrosulfuricum).